We begin with the raw amino-acid sequence, 338 residues long: Acyl-CoA:acyl-CoA alkyltransferase (338 aa).

Positions 18 and 56 each coordinate Mn(2+). The Proton acceptor role is filled by glutamate 97. Residue cysteine 123 is the Acyl-thioester intermediate of the active site.

It belongs to the thiolase-like superfamily. OleA family. In terms of assembly, homodimer. Weakly associates with the OleBCD complex.

Its subcellular location is the cytoplasm. The enzyme catalyses a 1,2-saturated acyl-CoA + an acyl-CoA + H2O = an (R)-2-alkyl-3-oxoalkanoate + 2 CoA + H(+). Its activity is regulated as follows. Inhibited by cerulenin. In terms of biological role, involved in olefin biosynthesis. Catalyzes a non-decarboxylative head-to-head Claisen condensation of two acyl-CoA molecules, generating an (R)-2-alkyl-3-oxoalkanoate. Is active with fatty acyl-CoA substrates that ranged from C(8) to C(16) in length, and is the most active with palmitoyl-CoA and myristoyl-CoA. This chain is Acyl-CoA:acyl-CoA alkyltransferase, found in Xanthomonas campestris pv. campestris (strain ATCC 33913 / DSM 3586 / NCPPB 528 / LMG 568 / P 25).